We begin with the raw amino-acid sequence, 207 residues long: Superoxide dismutase [Mn] (207 aa).

Mn(2+) contacts are provided by H28, H76, D160, and H164.

Belongs to the iron/manganese superoxide dismutase family. Mn(2+) is required as a cofactor.

The catalysed reaction is 2 superoxide + 2 H(+) = H2O2 + O2. In terms of biological role, destroys superoxide anion radicals which are normally produced within the cells and which are toxic to biological systems. In Mycobacterium intracellulare (strain ATCC 13950 / DSM 43223 / JCM 6384 / NCTC 13025 / 3600), this protein is Superoxide dismutase [Mn] (sodA).